We begin with the raw amino-acid sequence, 589 residues long: Nicotinate phosphoribosyltransferase (589 aa).

Residues Met-1 to Gln-30 are disordered. Residues Asn-15–Gln-30 are compositionally biased toward polar residues. The nicotinate site is built by Tyr-68 and Thr-256. The residue at position 259 (His-259) is a Phosphohistidine. Arg-356 contributes to the nicotinate binding site. Thr-418 is a binding site for 5-phospho-alpha-D-ribose 1-diphosphate.

Belongs to the NAPRTase family. Mg(2+) serves as cofactor. Requires Mn(2+) as cofactor. Transiently phosphorylated on a His residue during the reaction cycle. Phosphorylation strongly increases the affinity for substrates and increases the rate of nicotinate D-ribonucleotide production. Dephosphorylation regenerates the low-affinity form of the enzyme, leading to product release.

The enzyme catalyses nicotinate + 5-phospho-alpha-D-ribose 1-diphosphate + ATP + H2O = nicotinate beta-D-ribonucleotide + ADP + phosphate + diphosphate. Its pathway is cofactor biosynthesis; NAD(+) biosynthesis; nicotinate D-ribonucleotide from nicotinate: step 1/1. Catalyzes the first step in the biosynthesis of NAD from nicotinic acid, the ATP-dependent synthesis of beta-nicotinate D-ribonucleotide from nicotinate and 5-phospho-D-ribose 1-phosphate. Helps prevent cellular oxidative stress via its role in NAD biosynthesis. This is Nicotinate phosphoribosyltransferase (naprt) from Dictyostelium discoideum (Social amoeba).